The following is a 919-amino-acid chain: MALAKELMGYPLITERSSLVSSASHFKKRTQSTQFSINPFDRRPRKTKSGVVAAISEDLVKTLRFSTTTGDRKSEEEEKAAVKFKVRAVVTVRNKNKEDLKETLVKHLDAFADKIGRNIVLELISTQLDPKTKLPKKSNAAVLKDWSKKSKTKAERVHYTAEFTVDAAFGSPGAITVMNKHQKEFFLESITIEGFALGPVHFPCNSWVQSQKDHPDKRIFFTNQPYLPNETPSGLRVLREKELKNLRGDGSGVRKLSDRIYDFDVYNDLGNPDKSSELSRPKLGGKEVPYPRRCRTGRQSTVSDKDAESRVEKPLPMYVPRDEQFEESKQDTFAAGRLKAVLHHLIPSLKASIVAEDFADFGEIDRLYKEGLLLKLGFQDDIFKKFPLPKVVVDTLQESTKGLLKYDTPKILSKDKNAWLRDDEFARQAIAGINPVNIERVKTFPPVSNLDPKIYGPQHSALTDDHIIGHLDGFSVQQALEENRLYMLDYHDIFLPFLDRINALDGRKAYATRTIFFLTRLGTLKPVAIELSLPPHGPKHRSKRVLTPPVDATSNWMWQLAKAHVSSNDAGVHQLVNHWLRTHACLEPFILAAHRQLSAMHPIFKLLDPHMRYTLEINALARQSLISADGVIEGGFTAGAYGMEMSAAAYKSSWRFDMEGLPADLIRRGMAIPDATQPHGLKLLIEDYPYANDGLLLWSAIQTWVRTYVERYYPNPNLIKTDSELQSWYSESINVGHADLRDADWWPELSTVDDLVSILTTLIWLASAQHAALNFGQYPYGGYVPNRPPLMRRLIPDESDPEYASFISHPEKYYFSSMPSLAQTSKFMAVVDTLSTHSPDEEYIGERQQPSIWTGDAEIVEAFYGFAAEIGRIEKEIEKRNADPDRRNRCGAGVLPYELLVPSSEPGVTCRGVPNSVSI.

A chloroplast-targeting transit peptide spans 1-52; the sequence is MALAKELMGYPLITERSSLVSSASHFKKRTQSTQFSINPFDRRPRKTKSGVV. The PLAT domain maps to 86 to 222; it reads VRAVVTVRNK…DHPDKRIFFT (137 aa). Residues 225 to 919 form the Lipoxygenase domain; sequence PYLPNETPSG…CRGVPNSVSI (695 aa). Residues 272–310 are disordered; that stretch reads PDKSSELSRPKLGGKEVPYPRRCRTGRQSTVSDKDAESR. Fe cation contacts are provided by H578, H583, H770, N774, and I919.

Belongs to the lipoxygenase family. The cofactor is Fe cation. As to expression, expressed in roots and leaves.

Its subcellular location is the plastid. It is found in the chloroplast. The catalysed reaction is (9Z,12Z)-octadecadienoate + O2 = (13S)-hydroperoxy-(9Z,11E)-octadecadienoate. It catalyses the reaction (9Z,12Z,15Z)-octadecatrienoate + O2 = (13S)-hydroperoxy-(9Z,11E,15Z)-octadecatrienoate. It participates in lipid metabolism; oxylipin biosynthesis. In terms of biological role, 13S-lipoxygenase that can use linolenic acid as substrates. Plant lipoxygenases may be involved in a number of diverse aspects of plant physiology including growth and development, pest resistance, and senescence or responses to wounding. Catalyzes the hydroperoxidation of lipids containing a cis,cis-1,4-pentadiene structure. In Arabidopsis thaliana (Mouse-ear cress), this protein is Lipoxygenase 3, chloroplastic (LOX3).